The primary structure comprises 371 residues: RT1 class I histocompatibility antigen, AA alpha chain (371 aa).

The first 24 residues, 1 to 24, serve as a signal peptide directing secretion; that stretch reads MEAMAPRTLLLLLAAALAPTQTRA. An alpha-1 region spans residues 25–114; it reads GSHSLRYFYT…LRGYYNQSEG (90 aa). Residues 25–311 are Extracellular-facing; that stretch reads GSHSLRYFYT…PSTDSNMETT (287 aa). N-linked (GlcNAc...) asparagine glycosylation occurs at Asn-110. Residues 115 to 206 are alpha-2; that stretch reads GSHTIQEMYG…ELGKETLLRS (92 aa). The interval 207 to 298 is alpha-3; the sequence is DPPEAHVTLH…GLPKPLSQRW (92 aa). Residues 209 to 295 enclose the Ig-like C1-type domain; the sequence is PEAHVTLHPR…EHEGLPKPLS (87 aa). The N-linked (GlcNAc...) asparagine glycan is linked to Asn-280. The connecting peptide stretch occupies residues 299-311; the sequence is EPSPSTDSNMETT. A helical transmembrane segment spans residues 312–336; the sequence is VIYVILGAVAMIGAVAIIGAMVAVV. Residues 337–371 lie on the Cytoplasmic side of the membrane; it reads RRRKRNTGGKGGDYAPAPGRDSSQSSDVSLPDCKA. The interval 342–371 is disordered; sequence NTGGKGGDYAPAPGRDSSQSSDVSLPDCKA. A phosphoserine mark is found at Ser-362 and Ser-365.

This sequence belongs to the MHC class I family. As to quaternary structure, heterodimer of an alpha chain and a beta chain (beta-2-microglobulin).

Its subcellular location is the membrane. Involved in the presentation of foreign antigens to the immune system. The protein is RT1 class I histocompatibility antigen, AA alpha chain of Rattus norvegicus (Rat).